Reading from the N-terminus, the 1404-residue chain is DNA-directed RNA polymerase subunit beta' (1404 aa).

Cysteine 70, cysteine 72, cysteine 85, and cysteine 88 together coordinate Zn(2+). Positions 460, 462, and 464 each coordinate Mg(2+). Cysteine 814, cysteine 888, cysteine 895, and cysteine 898 together coordinate Zn(2+).

The protein belongs to the RNA polymerase beta' chain family. The RNAP catalytic core consists of 2 alpha, 1 beta, 1 beta' and 1 omega subunit. When a sigma factor is associated with the core the holoenzyme is formed, which can initiate transcription. It depends on Mg(2+) as a cofactor. Zn(2+) serves as cofactor.

It catalyses the reaction RNA(n) + a ribonucleoside 5'-triphosphate = RNA(n+1) + diphosphate. Its function is as follows. DNA-dependent RNA polymerase catalyzes the transcription of DNA into RNA using the four ribonucleoside triphosphates as substrates. The chain is DNA-directed RNA polymerase subunit beta' from Shewanella loihica (strain ATCC BAA-1088 / PV-4).